The primary structure comprises 283 residues: MAEITASLVKELRERTGAGMMDCKKALTEANGDIELAIENMRKSGAIKAAKKAGNVAADGVIKTKINGNVAFILEVNCQTDFVAKDAGFQAFADKVLDAAVAGKITDVEVLKAQFEEERVALVAKIGENINIRRVASLEGDVLGSYQHGARIGVLVAAKGADEELVKQLAMHVAASKPEFVKPEDVSADVVEKEYQVQLDIAMQSGKPKEIAEKMVEGRMKKFTGEVSLTGQPFVMEPSKSVGQLLKEHNADVTGFIRFEVGEGIEKVETDFAAEVAAMSKQS.

The tract at residues 80–83 is involved in Mg(2+) ion dislocation from EF-Tu; the sequence is TDFV.

It belongs to the EF-Ts family.

Its subcellular location is the cytoplasm. Associates with the EF-Tu.GDP complex and induces the exchange of GDP to GTP. It remains bound to the aminoacyl-tRNA.EF-Tu.GTP complex up to the GTP hydrolysis stage on the ribosome. The chain is Elongation factor Ts from Salmonella agona (strain SL483).